The following is a 66-amino-acid chain: Large ribosomal subunit protein uL30 (66 aa).

The protein belongs to the universal ribosomal protein uL30 family. As to quaternary structure, part of the 50S ribosomal subunit.

This is Large ribosomal subunit protein uL30 from Chelativorans sp. (strain BNC1).